A 205-amino-acid chain; its full sequence is LexA repressor (205 aa).

A DNA-binding region (H-T-H motif) is located at residues 28-48 (IRDIMKHFNFKSPRAAHKHLI). Active-site for autocatalytic cleavage activity residues include Ser-125 and Lys-163.

The protein belongs to the peptidase S24 family. Homodimer.

The enzyme catalyses Hydrolysis of Ala-|-Gly bond in repressor LexA.. Represses a number of genes involved in the response to DNA damage (SOS response), including recA and lexA. In the presence of single-stranded DNA, RecA interacts with LexA causing an autocatalytic cleavage which disrupts the DNA-binding part of LexA, leading to derepression of the SOS regulon and eventually DNA repair. This chain is LexA repressor, found in Petrotoga mobilis (strain DSM 10674 / SJ95).